Here is a 301-residue protein sequence, read N- to C-terminus: Acetyl-coenzyme A carboxylase carboxyl transferase subunit beta (301 aa).

Residues 25–294 (LWIKDPSTGE…NSDAPEHEKT (270 aa)) enclose the CoA carboxyltransferase N-terminal domain. Residues 282–301 (QPGNSDAPEHEKTEATDKAA) form a disordered region. The segment covering 288 to 301 (APEHEKTEATDKAA) has biased composition (basic and acidic residues).

The protein belongs to the AccD/PCCB family. In terms of assembly, acetyl-CoA carboxylase is a heterohexamer composed of biotin carboxyl carrier protein (AccB), biotin carboxylase (AccC) and two subunits each of ACCase subunit alpha (AccA) and ACCase subunit beta (AccD).

Its subcellular location is the cytoplasm. It carries out the reaction N(6)-carboxybiotinyl-L-lysyl-[protein] + acetyl-CoA = N(6)-biotinyl-L-lysyl-[protein] + malonyl-CoA. It participates in lipid metabolism; malonyl-CoA biosynthesis; malonyl-CoA from acetyl-CoA: step 1/1. In terms of biological role, component of the acetyl coenzyme A carboxylase (ACC) complex. Biotin carboxylase (BC) catalyzes the carboxylation of biotin on its carrier protein (BCCP) and then the CO(2) group is transferred by the transcarboxylase to acetyl-CoA to form malonyl-CoA. This chain is Acetyl-coenzyme A carboxylase carboxyl transferase subunit beta, found in Brucella anthropi (strain ATCC 49188 / DSM 6882 / CCUG 24695 / JCM 21032 / LMG 3331 / NBRC 15819 / NCTC 12168 / Alc 37) (Ochrobactrum anthropi).